Reading from the N-terminus, the 986-residue chain is Translation initiation factor IF-2 (986 aa).

Positions 47 to 388 are disordered; the sequence is SAPAQTPHKE…RSKGRKGKYE (342 aa). Residues 53-64 are compositionally biased toward basic and acidic residues; that stretch reads PHKEVSQEEVRV. Over residues 78–94 the composition is skewed to low complexity; that stretch reads PEAASAEAASAPAAQEE. Basic and acidic residues predominate over residues 95–113; sequence APQKAEPEKVEAEKAEAPK. 2 stretches are compositionally biased toward low complexity: residues 127–141 and 153–214; these read EAAP…PAEA and APVA…QAPA. Basic and acidic residues-rich tracts occupy residues 215–225 and 268–278; these read KAEEQEPEKAT and GVERPGTERPA. A compositionally biased stretch (low complexity) spans 286-300; sequence PAGAPGRPGERPTTG. Residues 358-374 are compositionally biased toward basic and acidic residues; the sequence is GKKDSFKDILDKRERVF. Residues 486 to 653 enclose the tr-type G domain; it reads KRPPVVTIMG…MVLLQADVLE (168 aa). The segment at 495–502 is G1; it reads GHVDHGKT. 495 to 502 lines the GTP pocket; it reads GHVDHGKT. Residues 520-524 are G2; it reads GITQH. The segment at 541-544 is G3; that stretch reads DTPG. GTP-binding positions include 541-545 and 595-598; these read DTPGH and NKID. Residues 595–598 are G4; it reads NKID. Positions 631–633 are G5; it reads SAK.

It belongs to the TRAFAC class translation factor GTPase superfamily. Classic translation factor GTPase family. IF-2 subfamily.

The protein localises to the cytoplasm. In terms of biological role, one of the essential components for the initiation of protein synthesis. Protects formylmethionyl-tRNA from spontaneous hydrolysis and promotes its binding to the 30S ribosomal subunits. Also involved in the hydrolysis of GTP during the formation of the 70S ribosomal complex. This chain is Translation initiation factor IF-2, found in Citrifermentans bemidjiense (strain ATCC BAA-1014 / DSM 16622 / JCM 12645 / Bem) (Geobacter bemidjiensis).